The chain runs to 476 residues: 3-ketoacyl-CoA synthase 12 (476 aa).

The first 25 residues, 1-25 (MDLLFLFFSLLLSYLFFKIWKLIDS), serve as a signal peptide directing secretion. Residues 26–313 (KQDKDCYILD…FMLKLLIKKI (288 aa)) enclose the FAE domain. Active-site residues include cysteine 168, histidine 247, histidine 344, histidine 348, histidine 377, and asparagine 381.

Belongs to the thiolase-like superfamily. Chalcone/stilbene synthases family. As to expression, expressed in siliques, flowers and leaves.

It localises to the endoplasmic reticulum. It carries out the reaction a very-long-chain acyl-CoA + malonyl-CoA + H(+) = a very-long-chain 3-oxoacyl-CoA + CO2 + CoA. The protein operates within lipid metabolism; fatty acid biosynthesis. The chain is 3-ketoacyl-CoA synthase 12 from Arabidopsis thaliana (Mouse-ear cress).